The following is a 24-amino-acid chain: M-ectatotoxin-Eb2b (24 aa).

As to expression, expressed by the venom gland.

It is found in the secreted. Its function is as follows. Antimicrobial peptide active against Gram-negative bacterium E.coli MH1 (MIC=2.5 uM) and P.aeruginosa PAO1 (MIC=10 uM) and against Gram-positive bacterium A.globiformis VKM Ac-1112 (MIC=0.6 uM). In Ectatomma brunneum (Ant), this protein is M-ectatotoxin-Eb2b.